The chain runs to 228 residues: NAD(P)H-hydrate epimerase (228 aa).

The 205-residue stretch at 10–214 (AIDIDQELFN…DLERKYDLKI (205 aa)) folds into the YjeF N-terminal domain. (6S)-NADPHX is bound at residue 58-62 (NNGGD). K(+)-binding residues include asparagine 59 and aspartate 123. (6S)-NADPHX contacts are provided by residues 127–133 (GFSFKPP) and aspartate 156. Serine 159 provides a ligand contact to K(+).

Belongs to the NnrE/AIBP family. K(+) is required as a cofactor.

The catalysed reaction is (6R)-NADHX = (6S)-NADHX. It carries out the reaction (6R)-NADPHX = (6S)-NADPHX. Functionally, catalyzes the epimerization of the S- and R-forms of NAD(P)HX, a damaged form of NAD(P)H that is a result of enzymatic or heat-dependent hydration. This is a prerequisite for the S-specific NAD(P)H-hydrate dehydratase to allow the repair of both epimers of NAD(P)HX. The sequence is that of NAD(P)H-hydrate epimerase from Pediculus humanus subsp. corporis (Body louse).